A 179-amino-acid chain; its full sequence is Macro domain-containing protein XCC3184 (179 aa).

The Macro domain occupies 1–175; the sequence is MRIEVWQGDI…AYHQALATQE (175 aa).

Belongs to the MacroD-type family.

The chain is Macro domain-containing protein XCC3184 from Xanthomonas campestris pv. campestris (strain ATCC 33913 / DSM 3586 / NCPPB 528 / LMG 568 / P 25).